Reading from the N-terminus, the 575-residue chain is Eukaryotic translation initiation factor 3 subunit D (575 aa).

2 disordered regions span residues 36-66 and 103-177; these read PYSK…YGNR and STRT…DASV. The segment covering 39 to 59 has biased composition (basic and acidic residues); that stretch reads KGDKLGRMADWTEGKDRERGG. The segment covering 109–144 has biased composition (gly residues); it reads FGRGGGTVFGRGRGQRGGQAQRGGRGTFQRVGGRGG. Residues 163-174 are compositionally biased toward basic and acidic residues; the sequence is GWRDDKPQRNRD. Residues 302-316 are RNA gate; it reads NLDMVTVNENAADAP.

It belongs to the eIF-3 subunit D family. As to quaternary structure, component of the eukaryotic translation initiation factor 3 (eIF-3) complex.

The protein resides in the cytoplasm. In terms of biological role, mRNA cap-binding component of the eukaryotic translation initiation factor 3 (eIF-3) complex, which is involved in protein synthesis of a specialized repertoire of mRNAs and, together with other initiation factors, stimulates binding of mRNA and methionyl-tRNAi to the 40S ribosome. The eIF-3 complex specifically targets and initiates translation of a subset of mRNAs involved in cell proliferation. In the eIF-3 complex, eif3d specifically recognizes and binds the 7-methylguanosine cap of a subset of mRNAs. This chain is Eukaryotic translation initiation factor 3 subunit D, found in Phaeosphaeria nodorum (strain SN15 / ATCC MYA-4574 / FGSC 10173) (Glume blotch fungus).